The primary structure comprises 525 residues: GMP synthase [glutamine-hydrolyzing] (525 aa).

Residues Arg-9–Leu-207 form the Glutamine amidotransferase type-1 domain. Cys-86 (nucleophile) is an active-site residue. Active-site residues include His-181 and Glu-183. The 193-residue stretch at Trp-208–Arg-400 folds into the GMPS ATP-PPase domain. Ser-235 to Ser-241 is an ATP binding site.

As to quaternary structure, homodimer.

The catalysed reaction is XMP + L-glutamine + ATP + H2O = GMP + L-glutamate + AMP + diphosphate + 2 H(+). It participates in purine metabolism; GMP biosynthesis; GMP from XMP (L-Gln route): step 1/1. Catalyzes the synthesis of GMP from XMP. This is GMP synthase [glutamine-hydrolyzing] from Salmonella typhi.